The primary structure comprises 376 residues: Serine-arginine protein 55 (376 aa).

In terms of domain architecture, RRM 1 spans 4–74 (SRVYVGGLPY…ERVVVEPARG (71 aa)). Positions 73–114 (RGTARGSNRDRYDDRYGGRRGGGGGRYNEKNKNSRSSSRYGP) are disordered. Basic and acidic residues predominate over residues 79–89 (SNRDRYDDRYG). An RRM 2 domain is found at 120 to 193 (YRLIVENLSS…RRIHLVEDRR (74 aa)). Ser-165 carries the phosphoserine modification. Positions 185–194 (RIHLVEDRRG) are enriched in basic and acidic residues. The interval 185–376 (RIHLVEDRRG…PDRNNESMDD (192 aa)) is disordered. A compositionally biased stretch (gly residues) spans 196–205 (RSGGGGGSGR). Basic residues-rich tracts occupy residues 215-263 (SRSR…SRSN) and 271-283 (SKSK…RSRS). Residues 284-304 (PKRERDSRSRSRSVSKRESRS) show a composition bias toward basic and acidic residues.

This sequence belongs to the splicing factor SR family. Extensively phosphorylated on serine residues in the RS domain.

It localises to the nucleus. Essential for development. May have a critical role in splicing or in controlling alternative splice site use of at least some pre-mRNA in vivo. Not required for all splicing. May play a general role in the condensation or decondensation of chromatin. This Drosophila melanogaster (Fruit fly) protein is Serine-arginine protein 55 (B52).